Consider the following 162-residue polypeptide: uncharacterized protein (162 aa).

It to R.meliloti R02472.

This is an uncharacterized protein from Escherichia coli (strain K12).